A 195-amino-acid chain; its full sequence is Protein GrpE (195 aa).

Residues 1 to 60 are disordered; it reads MAKDEEKNSQASAAPNEGEVKAKQEQTSAKEPAAKAGETEKVADLQKQVEELTKQLDDQK. Basic and acidic residues predominate over residues 37–60; sequence GETEKVADLQKQVEELTKQLDDQK.

This sequence belongs to the GrpE family. Homodimer.

The protein resides in the cytoplasm. Participates actively in the response to hyperosmotic and heat shock by preventing the aggregation of stress-denatured proteins, in association with DnaK and GrpE. It is the nucleotide exchange factor for DnaK and may function as a thermosensor. Unfolded proteins bind initially to DnaJ; upon interaction with the DnaJ-bound protein, DnaK hydrolyzes its bound ATP, resulting in the formation of a stable complex. GrpE releases ADP from DnaK; ATP binding to DnaK triggers the release of the substrate protein, thus completing the reaction cycle. Several rounds of ATP-dependent interactions between DnaJ, DnaK and GrpE are required for fully efficient folding. The protein is Protein GrpE of Limosilactobacillus fermentum (strain NBRC 3956 / LMG 18251) (Lactobacillus fermentum).